Consider the following 358-residue polypeptide: Hydroxyproline O-arabinosyltransferase 3 (358 aa).

A helical; Signal-anchor membrane pass occupies residues 8-28 (LLFLLGFGFFVVTYNLLTLIV).

Ubiquitous.

Its subcellular location is the golgi apparatus. The protein resides in the cis-Golgi network membrane. It catalyses the reaction trans-4-hydroxy-L-prolyl-[protein] + UDP-beta-L-arabinofuranose = O-(beta-L-arabinofuranosyl)-trans-4-hydroxy-L-prolyl-[protein] + UDP + H(+). Glycosyltransferase involved in the O-arabinosylation of several proteins including extensins and small signaling peptides. Catalyzes the transfer of the initial L-arabinose to the hydroxyl group of Hyp residues. Contributes redundantly with HPAT1 and HPAT2 to arabinosylation of EXT3, but main contributor to arabinosylation of CLE peptides. The polypeptide is Hydroxyproline O-arabinosyltransferase 3 (Arabidopsis thaliana (Mouse-ear cress)).